The primary structure comprises 508 residues: Acetyl-coenzyme A carboxylase carboxyl transferase subunit beta, chloroplastic (508 aa).

Disordered stretches follow at residues 30 to 51 (PIENASESKDPNRNDTDKNIQG) and 173 to 234 (NSSN…SSTH). Over residues 35-47 (SESKDPNRNDTDK) the composition is skewed to basic and acidic residues. A compositionally biased stretch (low complexity) spans 173-219 (NSSNNNSSNENSSNENSSNENSSNENSSNDYISSSISSQSENSSQNE). Over residues 220–234 (DITTSDQTIPESSTH) the composition is skewed to polar residues. The CoA carboxyltransferase N-terminal domain occupies 244–508 (LWVQCENCYG…LHTFFPLNQN (265 aa)). Positions 248, 251, 267, and 270 each coordinate Zn(2+). Residues 248–270 (CENCYGLNYKKFFKSKMHLCEQC) form a C4-type zinc finger.

The protein belongs to the AccD/PCCB family. As to quaternary structure, acetyl-CoA carboxylase is a heterohexamer composed of biotin carboxyl carrier protein, biotin carboxylase and 2 subunits each of ACCase subunit alpha and ACCase plastid-coded subunit beta (accD). The cofactor is Zn(2+).

Its subcellular location is the plastid. The protein localises to the chloroplast stroma. It catalyses the reaction N(6)-carboxybiotinyl-L-lysyl-[protein] + acetyl-CoA = N(6)-biotinyl-L-lysyl-[protein] + malonyl-CoA. The protein operates within lipid metabolism; malonyl-CoA biosynthesis; malonyl-CoA from acetyl-CoA: step 1/1. Its function is as follows. Component of the acetyl coenzyme A carboxylase (ACC) complex. Biotin carboxylase (BC) catalyzes the carboxylation of biotin on its carrier protein (BCCP) and then the CO(2) group is transferred by the transcarboxylase to acetyl-CoA to form malonyl-CoA. In Lactuca sativa (Garden lettuce), this protein is Acetyl-coenzyme A carboxylase carboxyl transferase subunit beta, chloroplastic.